A 1585-amino-acid chain; its full sequence is Adhesion G protein-coupled receptor B2 (1585 aa).

The N-terminal stretch at 1 to 32 (MENTGWMGKGHRMTPACPLLLSVILSLRLATA) is a signal peptide. At 33-936 (FDPAPSACSA…ELAGSPSVPL (904 aa)) the chain is on the extracellular side. 3 N-linked (GlcNAc...) asparagine glycosylation sites follow: Asn-106, Asn-191, and Asn-192. Low complexity predominate over residues 229-238 (AGAGSTTTTS). The interval 229-271 (AGAGSTTTTSPGPPAAHTLSNALVPGGPAPPAEADLHSGSSND) is disordered. An O-linked (Xyl...) (chondroitin sulfate) serine glycan is attached at Ser-266. TSP type-1 domains are found at residues 309-362 (DPAA…ATCP), 364-417 (HGVW…AACP), 419-472 (EGQW…LECP), and 475-528 (DSKW…KRCP). Cystine bridges form between Cys-321/Cys-355, Cys-325/Cys-361, Cys-336/Cys-345, Cys-376/Cys-411, Cys-380/Cys-416, Cys-391/Cys-401, Cys-431/Cys-466, Cys-435/Cys-471, Cys-446/Cys-456, Cys-487/Cys-522, Cys-491/Cys-527, Cys-502/Cys-512, Cys-534/Cys-569, and Cys-557/Cys-587. An N-linked (GlcNAc...) asparagine glycan is attached at Asn-356. N-linked (GlcNAc...) asparagine glycosylation is present at Asn-437. N-linked (GlcNAc...) asparagine glycosylation is found at Asn-560 and Asn-645. The region spanning 757 to 924 (DRLFLPKEVL…AVLAQPPKDL (168 aa)) is the GAIN-B domain. The disordered stretch occupies residues 767–806 (SLSSPGKPATSGAAGSPGRGRGPGTVPPGPGHSHQRLLPA). Residues 769-780 (SSPGKPATSGAA) show a composition bias toward low complexity. Asn-867 is a glycosylation site (N-linked (GlcNAc...) asparagine). Intrachain disulfides connect Cys-874–Cys-906 and Cys-894–Cys-908. Residues 874-924 (CASWDYSRADASSGDWDTENCQTLETQAAHTRCQCQHLSTFAVLAQPPKDL) form a GPS region. A helical transmembrane segment spans residues 937-957 (VIGCAVSCMALLTLLAIYAAF). Topologically, residues 958–965 (WRFIKSER) are cytoplasmic. The chain crosses the membrane as a helical span at residues 966–986 (SIILLNFCLSILASNILILVG). Residues 987-994 (QSRVLSKG) lie on the Extracellular side of the membrane. Residues 995–1015 (VCTMTAAFLHFFFLSSFCWVL) form a helical membrane-spanning segment. Over 1016–1036 (TEAWQSYLAVIGRMRTRLVRK) the chain is Cytoplasmic. The chain crosses the membrane as a helical span at residues 1037–1057 (RFLCLGWGLPALVVAVSVGFT). Topologically, residues 1058-1078 (RTKGYGTSSYCWLSLEGGLLY) are extracellular. Residues 1079–1099 (AFVGPAAVIVLVNMLIGIIVF) traverse the membrane as a helical segment. Residues 1100 to 1121 (NKLMARDGISDKSKKQRAGSER) are Cytoplasmic-facing. The helical transmembrane segment at 1122–1142 (CPWASLLLPCSACGAVPSPLL) threads the bilayer. Residues 1143–1153 (SSASARNAMAS) are Extracellular-facing. Residues 1154–1174 (LWSSCVVLPLLALTWMSAVLA) traverse the membrane as a helical segment. Residues 1175–1585 (MTDRRSVLFQ…PPDGDFQTEV (411 aa)) lie on the Cytoplasmic side of the membrane. Tyr-1351 is subject to Phosphotyrosine. 3 disordered regions span residues 1359–1385 (LSLQ…PRRA), 1423–1454 (FQPP…GSTM), and 1498–1585 (YRSQ…QTEV). The span at 1372 to 1382 (DAPRARPEGTP) shows a compositional bias: basic and acidic residues. Positions 1543 to 1552 (SWSTFKSMTL) are enriched in polar residues. Residues 1575–1585 (EPPDGDFQTEV) show a composition bias toward acidic residues.

This sequence belongs to the G-protein coupled receptor 2 family. Adhesion G-protein coupled receptor (ADGR) subfamily. As to quaternary structure, heterodimer of 2 chains generated by proteolytic processing; the large extracellular N-terminal fragment and the membrane-bound C-terminal fragment predominantly remain associated and non-covalently linked. Interacts with GABPB2. Interacts (via carboxy-terminus) with TAX1BP3. Interacts with GNAZ. Interacts with SH3GL2. In terms of processing, glycosylated. Post-translationally, autoproteolytically processed at the GPS region of the GAIN-B domain; this cleavage modulates receptor activity. Additionally, furin is involved in the cleavage at another site, in the middle of the extracellular domain, generating a soluble fragment. As to expression, detected in cerebrospinal fluid (at protein level). Strongly expressed in brain. Also detected in heart, thymus, skeletal muscle, and different cell lines.

It is found in the cell membrane. The protein localises to the secreted. Receptor activity is regulated by proteolytic processing. The long N-terminal has a an inhibitory effect on the constitutive signaling activity. Removal of the N-terminal region induces an increase of the receptor activity. Functionally, orphan G-protein coupled receptor involved in cell adhesion and probably in cell-cell interactions. Activates NFAT-signaling pathway, a transcription factor, via the G-protein GNAZ. Involved in angiogenesis inhibition. The sequence is that of Adhesion G protein-coupled receptor B2 from Homo sapiens (Human).